Reading from the N-terminus, the 197-residue chain is MLHFSGSLTRLVGELKKLPGVGEKSALRLAFHLLKHPNNIEALAQSLLQVGERVHLCSVCFAITEDDPCWICSGERDSGTICVVEEPQDLMALERSRAFGGRYHVLQGALSPLNGVTPKDLRIAELMQRLQGGEVREVLIATNFTVEGEATALYLTRMIKPLSIKVTRLAHGIPVGSDLEYVDAATVQRAVEGRSEL.

The segment at 57–72 (CSVCFAITEDDPCWIC) adopts a C4-type zinc-finger fold. Residues 79–174 (GTICVVEEPQ…KVTRLAHGIP (96 aa)) enclose the Toprim domain.

Belongs to the RecR family.

Its function is as follows. May play a role in DNA repair. It seems to be involved in an RecBC-independent recombinational process of DNA repair. It may act with RecF and RecO. In Geobacter sp. (strain M21), this protein is Recombination protein RecR.